The primary structure comprises 351 residues: Phosphoribosylformylglycinamidine cyclo-ligase (351 aa).

Belongs to the AIR synthase family.

It localises to the cytoplasm. It catalyses the reaction 2-formamido-N(1)-(5-O-phospho-beta-D-ribosyl)acetamidine + ATP = 5-amino-1-(5-phospho-beta-D-ribosyl)imidazole + ADP + phosphate + H(+). Its pathway is purine metabolism; IMP biosynthesis via de novo pathway; 5-amino-1-(5-phospho-D-ribosyl)imidazole from N(2)-formyl-N(1)-(5-phospho-D-ribosyl)glycinamide: step 2/2. This chain is Phosphoribosylformylglycinamidine cyclo-ligase, found in Synechococcus sp. (strain JA-3-3Ab) (Cyanobacteria bacterium Yellowstone A-Prime).